A 389-amino-acid polypeptide reads, in one-letter code: Cytochrome oxidase assembly protein SHY1 (389 aa).

Residues 1–71 (MSLLGARSTY…SRRERSFGKK (71 aa)) lie on the Mitochondrial matrix side of the membrane. A helical membrane pass occupies residues 72–92 (IVLGLMFAMPIISFYLGTWQV). The Mitochondrial intermembrane portion of the chain corresponds to 93 to 341 (RRLKWKTKLI…KPTIDLKNNH (249 aa)). The interval 292 to 311 (GTQAVDNNTSKPRSRQEMPT) is disordered. Residues 342–362 (LQYLVTWYGLSFLSTIFLIVA) form a helical membrane-spanning segment. Residues 363–389 (LRKAKRGGVVSQDQLMKEKLKHSRKYM) lie on the Mitochondrial matrix side of the membrane.

It belongs to the SURF1 family. In terms of assembly, interacts with COA1, COX14 and MSS51.

Its subcellular location is the mitochondrion inner membrane. In terms of biological role, required for efficient assembly of cytochrome c oxidase in the mitochondrial inner membrane. Involved in a step that couples MSS51-COX14-dependent regulation of COX1 translation to early steps of cytochrome c oxidase assembly. This Saccharomyces cerevisiae (strain ATCC 204508 / S288c) (Baker's yeast) protein is Cytochrome oxidase assembly protein SHY1 (SHY1).